The chain runs to 91 residues: uncharacterized protein (91 aa).

The chain crosses the membrane as a helical span at residues 50-70; sequence FGFFGGPFIGGLAGGLIGSAL.

It is found in the cell membrane. This is an uncharacterized protein from Bacillus subtilis (strain 168).